The primary structure comprises 285 residues: Probable endonuclease 4 (285 aa).

Residues H69, H109, E145, D179, H182, H216, D229, H231, and E261 each coordinate Zn(2+).

This sequence belongs to the AP endonuclease 2 family. It depends on Zn(2+) as a cofactor.

It catalyses the reaction Endonucleolytic cleavage to 5'-phosphooligonucleotide end-products.. Its function is as follows. Endonuclease IV plays a role in DNA repair. It cleaves phosphodiester bonds at apurinic or apyrimidinic (AP) sites, generating a 3'-hydroxyl group and a 5'-terminal sugar phosphate. The sequence is that of Probable endonuclease 4 from Citrobacter koseri (strain ATCC BAA-895 / CDC 4225-83 / SGSC4696).